The sequence spans 112 residues: Large ribosomal subunit protein bL17 (112 aa).

The protein belongs to the bacterial ribosomal protein bL17 family. In terms of assembly, part of the 50S ribosomal subunit. Contacts protein L32.

This is Large ribosomal subunit protein bL17 from Moorella thermoacetica (strain ATCC 39073 / JCM 9320).